The following is a 428-amino-acid chain: MELRAVRGMNDILPEEVERWHKLEGAFRLHAELHGYAEVRTPLLEPTELFRHQMGETTDVVEKEMYSFERHGDHLTVRPEGTAGAARAYVEHAVHAKEPVTRWYYLGPMFRGERPAKGRYRQFYQAGCELFGDPGPLCDAETIDLVAGFLQRIGVGEFVVHVNSLGSAGTRERYREALLAHYTPRKAELSEDSQRRLEKNPLRILDSKDQRDHEVSRDAPSILDLLDDADRAHWDGVRRCLDVLGVNYVVDRSLVRGLDYYTRTLFEVKATAGDLGAQSTLAGGGRYDAMVAGLGGPSVPAIGFAMGMERLLTMMPGASPRRRPGCFLAPLGQSGADQALVLAKQLRALGVPVELDGRGGRLKAMLRRADSLGARLCVILGDAEIERGVLQIKDLVAHVQEEIPLEGAARVLADRALEAPPGGQRGAR.

The protein belongs to the class-II aminoacyl-tRNA synthetase family. As to quaternary structure, homodimer.

Its subcellular location is the cytoplasm. The enzyme catalyses tRNA(His) + L-histidine + ATP = L-histidyl-tRNA(His) + AMP + diphosphate + H(+). In Sorangium cellulosum (strain So ce56) (Polyangium cellulosum (strain So ce56)), this protein is Histidine--tRNA ligase.